A 406-amino-acid polypeptide reads, in one-letter code: Coenzyme A biosynthesis bifunctional protein CoaBC (406 aa).

Positions 1–191 are phosphopantothenoylcysteine decarboxylase; the sequence is MLNNRNVLLC…ETSAPLEGKH (191 aa). Catalysis depends on C157, which acts as the Proton donor. Residues 192–406 are phosphopantothenate--cysteine ligase; the sequence is VVITAGPTRE…ALSKQTGERS (215 aa). Residues D281, K291, F325, K339, and K343 each coordinate CTP.

In the N-terminal section; belongs to the HFCD (homo-oligomeric flavin containing Cys decarboxylase) superfamily. It in the C-terminal section; belongs to the PPC synthetase family. Mg(2+) serves as cofactor. The cofactor is FMN.

The catalysed reaction is N-[(R)-4-phosphopantothenoyl]-L-cysteine + H(+) = (R)-4'-phosphopantetheine + CO2. The enzyme catalyses (R)-4'-phosphopantothenate + L-cysteine + CTP = N-[(R)-4-phosphopantothenoyl]-L-cysteine + CMP + diphosphate + H(+). It functions in the pathway cofactor biosynthesis; coenzyme A biosynthesis; CoA from (R)-pantothenate: step 2/5. The protein operates within cofactor biosynthesis; coenzyme A biosynthesis; CoA from (R)-pantothenate: step 3/5. Its function is as follows. Catalyzes two sequential steps in the biosynthesis of coenzyme A. In the first step cysteine is conjugated to 4'-phosphopantothenate to form 4-phosphopantothenoylcysteine. In the second step the latter compound is decarboxylated to form 4'-phosphopantotheine. The protein is Coenzyme A biosynthesis bifunctional protein CoaBC of Bacillus subtilis (strain 168).